The chain runs to 131 residues: Large-conductance mechanosensitive channel (131 aa).

3 consecutive transmembrane segments (helical) span residues 8–28 (FAMRGNVVDLAVGVIIGGAFG), 30–50 (IVSSLVNDILMPLVGLLLGGV), and 67–87 (GMFIQTVVDFFIISFSIFVFV).

Belongs to the MscL family. Homopentamer.

The protein resides in the cell membrane. Functionally, channel that opens in response to stretch forces in the membrane lipid bilayer. May participate in the regulation of osmotic pressure changes within the cell. The sequence is that of Large-conductance mechanosensitive channel from Geobacillus sp. (strain WCH70).